Consider the following 156-residue polypeptide: Transcription elongation factor GreA (156 aa).

Positions 7–27 (MTQEGLDKLKLELENLKLVKR) form a coiled coil.

This sequence belongs to the GreA/GreB family.

In terms of biological role, necessary for efficient RNA polymerase transcription elongation past template-encoded arresting sites. The arresting sites in DNA have the property of trapping a certain fraction of elongating RNA polymerases that pass through, resulting in locked ternary complexes. Cleavage of the nascent transcript by cleavage factors such as GreA or GreB allows the resumption of elongation from the new 3'terminus. GreA releases sequences of 2 to 3 nucleotides. The polypeptide is Transcription elongation factor GreA (Lactococcus lactis subsp. lactis (strain IL1403) (Streptococcus lactis)).